The chain runs to 549 residues: Cation/acetate symporter ActP (549 aa).

13 helical membrane passes run 33–53 (WQAI…TYWA), 77–97 (LAIA…ALVF), 103–123 (GLIY…LIAE), 148–168 (ILSA…QMVG), 183–203 (IAVV…GMLA), 206–226 (WVQI…AFMV), 262–282 (ISAL…PHIL), 303–323 (GFMG…IMLV), 355–375 (LFLG…VAGL), 404–424 (VSKI…VLFE), 428–448 (IAFM…PIIL), 464–484 (GGWL…TIWV), and 493–513 (IFPY…GIWF).

Belongs to the sodium:solute symporter (SSF) (TC 2.A.21) family.

The protein localises to the cell inner membrane. Functionally, transports acetate. In Salmonella arizonae (strain ATCC BAA-731 / CDC346-86 / RSK2980), this protein is Cation/acetate symporter ActP.